The primary structure comprises 122 residues: Modulator protein MzrA (122 aa).

Residues 1-10 (MKILTRIPRR) are Cytoplasmic-facing. Residues 11–31 (LLPWLLGGALALVAVSFAPAL) traverse the membrane as a helical segment. The Periplasmic segment spans residues 32 to 122 (LSHETVVQIR…NQDANRSIYS (91 aa)).

It belongs to the MzrA family. In terms of assembly, interacts with EnvZ.

It is found in the cell inner membrane. Functionally, modulates the activity of the EnvZ/OmpR two-component regulatory system, probably by directly modulating EnvZ enzymatic activity and increasing stability of phosphorylated OmpR. The sequence is that of Modulator protein MzrA from Pantoea sp. (strain At-9b).